The following is a 201-amino-acid chain: Akirin-2 (201 aa).

2 positions are modified to phosphoserine: Ser-18 and Ser-21. Residues 22 to 27 (PKRRRC) carry the Nuclear localization signal motif. The residue at position 55 (Ser-55) is a Phosphoserine. Residues 198–201 (SYVS) carry the SYVS motif motif.

Belongs to the akirin family. As to quaternary structure, homodimer. Interacts with IPO9; the interaction is direct. Associates with 20S and 26S proteasomes. Interacts with SMARCD1; promoting SWI/SNF complex recruitment. Interacts with NFKBIZ. Interacts with YWHAB. Post-translationally, polyubiquitinated. Polyubiquitination is dependent of UBR5 that extends pre-ubiquitinated AKIRIN2. As to expression, highly expressed in testis, cerebrum and cerebellum, and barely detectable in liver, heart, spleen and muscle. Also highly expressed in various tumor cells from hepatoma, glioblastoma and pheochromocytoma.

Its subcellular location is the nucleus. The protein resides in the cytoplasm. It is found in the membrane. Functionally, molecular adapter that acts as a bridge between a variety of multiprotein complexes, and which is involved in embryonic development, immunity, myogenesis and brain development. Plays a key role in nuclear protein degradation by promoting import of proteasomes into the nucleus: directly binds to fully assembled 20S proteasomes at one end and to nuclear import receptor IPO9 at the other end, bridging them together and mediating the import of pre-assembled proteasome complexes through the nuclear pore. Involved in innate immunity by regulating the production of interleukin-6 (IL6) downstream of Toll-like receptor (TLR): acts by bridging the NF-kappa-B inhibitor NFKBIZ and the SWI/SNF complex, leading to promote induction of IL6. Also involved in adaptive immunity by promoting B-cell activation. Involved in brain development: required for the survival and proliferation of cerebral cortical progenitor cells. Involved in myogenesis: required for skeletal muscle formation and skeletal development, possibly by regulating expression of muscle differentiation factors. Also plays a role in facilitating interdigital tissue regression during limb development. The protein is Akirin-2 of Rattus norvegicus (Rat).